A 363-amino-acid polypeptide reads, in one-letter code: Small ribosomal subunit biogenesis GTPase RsgA (363 aa).

Positions 112–268 constitute a CP-type G domain; that stretch reads HQQVIAANID…LIDTPGMREL (157 aa). GTP is bound by residues 157 to 160 and 210 to 218; these read TKAD and GSSGAGKST. Positions 291, 296, 298, and 304 each coordinate Zn(2+). The interval 340–363 is disordered; it reads RVAQNNRGKGSGKRPASVDRPGRH.

This sequence belongs to the TRAFAC class YlqF/YawG GTPase family. RsgA subfamily. In terms of assembly, monomer. Associates with 30S ribosomal subunit, binds 16S rRNA. It depends on Zn(2+) as a cofactor.

The protein localises to the cytoplasm. In terms of biological role, one of several proteins that assist in the late maturation steps of the functional core of the 30S ribosomal subunit. Helps release RbfA from mature subunits. May play a role in the assembly of ribosomal proteins into the subunit. Circularly permuted GTPase that catalyzes slow GTP hydrolysis, GTPase activity is stimulated by the 30S ribosomal subunit. This Xanthomonas axonopodis pv. citri (strain 306) protein is Small ribosomal subunit biogenesis GTPase RsgA.